The sequence spans 293 residues: NAD kinase (293 aa).

D74 functions as the Proton acceptor in the catalytic mechanism. NAD(+) is bound by residues 74-75 (DG), R79, 148-149 (NE), R176, D178, 189-194 (TAYALS), and Q248.

The protein belongs to the NAD kinase family. Requires a divalent metal cation as cofactor.

Its subcellular location is the cytoplasm. It carries out the reaction NAD(+) + ATP = ADP + NADP(+) + H(+). In terms of biological role, involved in the regulation of the intracellular balance of NAD and NADP, and is a key enzyme in the biosynthesis of NADP. Catalyzes specifically the phosphorylation on 2'-hydroxyl of the adenosine moiety of NAD to yield NADP. This chain is NAD kinase, found in Blochmanniella floridana.